A 416-amino-acid chain; its full sequence is UDP-N-acetylmuramoylalanine--D-glutamate ligase (416 aa).

Residue 104 to 110 coordinates ATP; the sequence is GSNGKST.

Belongs to the MurCDEF family.

Its subcellular location is the cytoplasm. The enzyme catalyses UDP-N-acetyl-alpha-D-muramoyl-L-alanine + D-glutamate + ATP = UDP-N-acetyl-alpha-D-muramoyl-L-alanyl-D-glutamate + ADP + phosphate + H(+). Its pathway is cell wall biogenesis; peptidoglycan biosynthesis. Its function is as follows. Cell wall formation. Catalyzes the addition of glutamate to the nucleotide precursor UDP-N-acetylmuramoyl-L-alanine (UMA). In Francisella tularensis subsp. mediasiatica (strain FSC147), this protein is UDP-N-acetylmuramoylalanine--D-glutamate ligase.